The primary structure comprises 340 residues: MAPLPHSVSPRHTQVADNGRLSEPTDYHPPTEISTDDGTVNILQLTDLHLYFDTPKATHEQDINKDSAHQTITGICQNNSAKRGNPHSADAINHSVTPVIHNYASFEACLTQALSEDVRCDLIVVTGDLVSEIHPQLYQHLYQRLHQSGIPFACIAGNHDVTDEIGKDLPFEQRSFEPHEPDSRLLSRYSMKLNGWEILFINSSVPGQIFGRIGNKNLYWLSQKLANSHHPVIIAMHHHLLPMHSAWIDAHITQDATEFWQTVAPFNALKAVVGGHVHQSSTRSYQGVQLYSTPSTGYQFKPGCDDFTLDDEAKPGYRWLSLKANGTLQSWVVRLEDNAG.

The disordered stretch occupies residues 1 to 36 (MAPLPHSVSPRHTQVADNGRLSEPTDYHPPTEISTD). Fe cation contacts are provided by Asp-47, His-49, Asp-128, Asn-158, His-237, His-276, and His-278. AMP is bound by residues His-49, Asp-128, and 158-159 (NH). Residue His-278 coordinates AMP.

It belongs to the cyclic nucleotide phosphodiesterase class-III family. Fe(2+) serves as cofactor.

This is Probable cyclic nucleotide phosphodiesterase PsycPRwf_0181 from Psychrobacter sp. (strain PRwf-1).